The primary structure comprises 476 residues: Adenosylhomocysteinase (476 aa).

Substrate-binding residues include Thr-67, Asp-142, and Glu-202. Position 203-205 (203-205 (TTT)) interacts with NAD(+). Substrate-binding residues include Lys-232 and Asp-236. NAD(+) contacts are provided by residues Asn-237, 266–271 (GYGDVG), Glu-289, Asn-324, 345–347 (IGH), and Asn-390.

It belongs to the adenosylhomocysteinase family. Requires NAD(+) as cofactor.

It localises to the cytoplasm. The catalysed reaction is S-adenosyl-L-homocysteine + H2O = L-homocysteine + adenosine. The protein operates within amino-acid biosynthesis; L-homocysteine biosynthesis; L-homocysteine from S-adenosyl-L-homocysteine: step 1/1. May play a key role in the regulation of the intracellular concentration of adenosylhomocysteine. This Parasynechococcus marenigrum (strain WH8102) protein is Adenosylhomocysteinase.